The primary structure comprises 224 residues: Protein GrpE (224 aa).

The tract at residues 1-72 (MEKERDVAQE…KAKEEQNEEL (72 aa)) is disordered. Residues 10 to 19 (EQATYEQESP) show a composition bias toward polar residues. Residues 20–67 (NAERQEELKENEHQEKNAPEEQEKVREENGRQDAQKDEIGDPEKAKEE) are compositionally biased toward basic and acidic residues.

It belongs to the GrpE family. As to quaternary structure, homodimer.

It is found in the cytoplasm. Its function is as follows. Participates actively in the response to hyperosmotic and heat shock by preventing the aggregation of stress-denatured proteins, in association with DnaK and GrpE. It is the nucleotide exchange factor for DnaK and may function as a thermosensor. Unfolded proteins bind initially to DnaJ; upon interaction with the DnaJ-bound protein, DnaK hydrolyzes its bound ATP, resulting in the formation of a stable complex. GrpE releases ADP from DnaK; ATP binding to DnaK triggers the release of the substrate protein, thus completing the reaction cycle. Several rounds of ATP-dependent interactions between DnaJ, DnaK and GrpE are required for fully efficient folding. In Parageobacillus thermoglucosidasius (Geobacillus thermoglucosidasius), this protein is Protein GrpE.